We begin with the raw amino-acid sequence, 426 residues long: Gamma-glutamyl phosphate reductase (426 aa).

This sequence belongs to the gamma-glutamyl phosphate reductase family.

The protein localises to the cytoplasm. It carries out the reaction L-glutamate 5-semialdehyde + phosphate + NADP(+) = L-glutamyl 5-phosphate + NADPH + H(+). It participates in amino-acid biosynthesis; L-proline biosynthesis; L-glutamate 5-semialdehyde from L-glutamate: step 2/2. Functionally, catalyzes the NADPH-dependent reduction of L-glutamate 5-phosphate into L-glutamate 5-semialdehyde and phosphate. The product spontaneously undergoes cyclization to form 1-pyrroline-5-carboxylate. The protein is Gamma-glutamyl phosphate reductase of Acidovorax ebreus (strain TPSY) (Diaphorobacter sp. (strain TPSY)).